We begin with the raw amino-acid sequence, 347 residues long: sn-1 oleoyl-lipid 12-desaturase (347 aa).

The next 2 helical transmembrane spans lie at 41 to 63 and 67 to 85; these read AWSR…AIAP and LLPV…FVIG. The Histidine box-1 motif lies at 86 to 90; the sequence is HDCGH. The chain crosses the membrane as a helical span at residues 98-118; it reads WVNNLVGHLAFLPLIYPFHSW. A Histidine box-2 motif is present at residues 122 to 126; that stretch reads HNHHH. 3 helical membrane passes run 164 to 184, 196 to 216, and 218 to 238; these read LWWL…FAFE, LFVI…LGVW, and VVKF…TFTL. A Histidine box-3 motif is present at residues 286-290; sequence HHLST.

This sequence belongs to the fatty acid desaturase type 2 family. Fe(2+) is required as a cofactor.

The protein localises to the membrane. The enzyme catalyses a 1-[(9Z)-octadecenoyl]-2-acyl-glycerolipid + 2 reduced [2Fe-2S]-[ferredoxin] + O2 + 2 H(+) = a 1-[(9Z,12Z)-octadecdienoyl]-2-acyl-glycerolipid + 2 oxidized [2Fe-2S]-[ferredoxin] + 2 H2O. Its pathway is lipid metabolism; polyunsaturated fatty acid biosynthesis. Its function is as follows. Desaturase involved in fatty acid biosynthesis. Introduces a double bond at carbon 12 of oleoyl groups (18:1) attached to the sn-1 position of the glycerol moiety of membrane glycerolipids. Can also efficiently catalyze the desaturation of palmitoleic acid (16:1) in vitro. The chain is sn-1 oleoyl-lipid 12-desaturase from Picosynechococcus sp. (strain ATCC 27264 / PCC 7002 / PR-6) (Agmenellum quadruplicatum).